Reading from the N-terminus, the 223-residue chain is Endonuclease V (223 aa).

Mg(2+) contacts are provided by Asp35 and Asp103.

Belongs to the endonuclease V family. Mg(2+) serves as cofactor.

It is found in the cytoplasm. The catalysed reaction is Endonucleolytic cleavage at apurinic or apyrimidinic sites to products with a 5'-phosphate.. DNA repair enzyme involved in the repair of deaminated bases. Selectively cleaves double-stranded DNA at the second phosphodiester bond 3' to a deoxyinosine leaving behind the intact lesion on the nicked DNA. This is Endonuclease V from Cronobacter sakazakii (strain ATCC BAA-894) (Enterobacter sakazakii).